Here is a 151-residue protein sequence, read N- to C-terminus: D-aminoacyl-tRNA deacylase (151 aa).

The Gly-cisPro motif, important for rejection of L-amino acids signature appears at 138 to 139; that stretch reads GP.

This sequence belongs to the DTD family. Homodimer.

Its subcellular location is the cytoplasm. It carries out the reaction glycyl-tRNA(Ala) + H2O = tRNA(Ala) + glycine + H(+). It catalyses the reaction a D-aminoacyl-tRNA + H2O = a tRNA + a D-alpha-amino acid + H(+). An aminoacyl-tRNA editing enzyme that deacylates mischarged D-aminoacyl-tRNAs. Also deacylates mischarged glycyl-tRNA(Ala), protecting cells against glycine mischarging by AlaRS. Acts via tRNA-based rather than protein-based catalysis; rejects L-amino acids rather than detecting D-amino acids in the active site. By recycling D-aminoacyl-tRNA to D-amino acids and free tRNA molecules, this enzyme counteracts the toxicity associated with the formation of D-aminoacyl-tRNA entities in vivo and helps enforce protein L-homochirality. In Picosynechococcus sp. (strain ATCC 27264 / PCC 7002 / PR-6) (Agmenellum quadruplicatum), this protein is D-aminoacyl-tRNA deacylase.